A 154-amino-acid polypeptide reads, in one-letter code: Myoglobin (154 aa).

The 147-residue stretch at 2-148 folds into the Globin domain; that stretch reads GLSDGEWQLV…FRNDMAAKYK (147 aa). Ser-4 carries the post-translational modification Phosphoserine. His-65 is a binding site for nitrite. His-65 contributes to the O2 binding site. Phosphothreonine is present on Thr-68. His-94 is a heme b binding site.

It belongs to the globin family. As to quaternary structure, monomeric.

It is found in the cytoplasm. The protein resides in the sarcoplasm. The catalysed reaction is Fe(III)-heme b-[protein] + nitric oxide + H2O = Fe(II)-heme b-[protein] + nitrite + 2 H(+). The enzyme catalyses H2O2 + AH2 = A + 2 H2O. Its function is as follows. Monomeric heme protein which primary function is to store oxygen and facilitate its diffusion within muscle tissues. Reversibly binds oxygen through a pentacoordinated heme iron and enables its timely and efficient release as needed during periods of heightened demand. Depending on the oxidative conditions of tissues and cells, and in addition to its ability to bind oxygen, it also has a nitrite reductase activity whereby it regulates the production of bioactive nitric oxide. Under stress conditions, like hypoxia and anoxia, it also protects cells against reactive oxygen species thanks to its pseudoperoxidase activity. The chain is Myoglobin (MB) from Sapajus apella (Brown-capped capuchin).